Here is a 376-residue protein sequence, read N- to C-terminus: MTEISAKKVKVSALCELCHARKAVMKRPKNLQKLCKDCFYKVFETEIHNTIVDAKLFSPGDKVAIGASGGKDSTVLASVLKTLNERYDYGLILVLLSIDEGIKGYRDDSLATVKRNQVQYEMPLEIISYRDLYNWTMDEIVSCAGIRSSCTYCGVLRRQALDRGAAKLGINHVVTGHNADDMAETVLMNLLRGDTARLEKSCAIITQSAGSPIKRSKPFKYTYQKEIVLYAHYKKLDYFSTECTYAPEAFRGTARELLKSLESIRPSCIMDIIYSGEHLVLAPKKKKITTSYKTNKKKTHTENEVNADGSVSLGRKKQFEDGNRCEKCGYLSSNRICKACMLLAGLEMNRAKVSIDNNTAVDGAAVLTRTLEQLSF.

This sequence belongs to the TtcA family. CTU1/NCS6/ATPBD3 subfamily.

The protein localises to the cytoplasm. The protein operates within tRNA modification; 5-methoxycarbonylmethyl-2-thiouridine-tRNA biosynthesis. Its function is as follows. Plays a central role in 2-thiolation of mcm(5)S(2)U at tRNA wobble positions of tRNA(Lys), tRNA(Glu) and tRNA(Gln). Directly binds tRNAs and probably acts by catalyzing adenylation of tRNAs, an intermediate required for 2-thiolation. It is unclear whether it acts as a sulfurtransferase that transfers sulfur from thiocarboxylated URM1 onto the uridine of tRNAs at wobble position. Prior mcm(5) tRNA modification by the elongator complex is required for 2-thiolation. May also be involved in protein urmylation. The protein is Cytoplasmic tRNA 2-thiolation protein 1 of Scheffersomyces stipitis (strain ATCC 58785 / CBS 6054 / NBRC 10063 / NRRL Y-11545) (Yeast).